Here is a 106-residue protein sequence, read N- to C-terminus: Large ribosomal subunit protein uL23 (106 aa).

The protein belongs to the universal ribosomal protein uL23 family. In terms of assembly, part of the 50S ribosomal subunit. Contacts protein L29, and trigger factor when it is bound to the ribosome.

One of the early assembly proteins it binds 23S rRNA. One of the proteins that surrounds the polypeptide exit tunnel on the outside of the ribosome. Forms the main docking site for trigger factor binding to the ribosome. This Acinetobacter baylyi (strain ATCC 33305 / BD413 / ADP1) protein is Large ribosomal subunit protein uL23.